Reading from the N-terminus, the 674-residue chain is tRNA 5-methylaminomethyl-2-thiouridine biosynthesis bifunctional protein MnmC (674 aa).

The interval 1 to 246 (MFIMSSISHA…KREMIAGSLS (246 aa)) is tRNA (mnm(5)s(2)U34)-methyltransferase. The tract at residues 272–674 (IGGGIASATL…RKGKALTQKV (403 aa)) is FAD-dependent cmnm(5)s(2)U34 oxidoreductase.

The protein in the N-terminal section; belongs to the methyltransferase superfamily. tRNA (mnm(5)s(2)U34)-methyltransferase family. This sequence in the C-terminal section; belongs to the DAO family. Requires FAD as cofactor.

It localises to the cytoplasm. It carries out the reaction 5-aminomethyl-2-thiouridine(34) in tRNA + S-adenosyl-L-methionine = 5-methylaminomethyl-2-thiouridine(34) in tRNA + S-adenosyl-L-homocysteine + H(+). In terms of biological role, catalyzes the last two steps in the biosynthesis of 5-methylaminomethyl-2-thiouridine (mnm(5)s(2)U) at the wobble position (U34) in tRNA. Catalyzes the FAD-dependent demodification of cmnm(5)s(2)U34 to nm(5)s(2)U34, followed by the transfer of a methyl group from S-adenosyl-L-methionine to nm(5)s(2)U34, to form mnm(5)s(2)U34. This is tRNA 5-methylaminomethyl-2-thiouridine biosynthesis bifunctional protein MnmC from Vibrio cholerae serotype O1 (strain ATCC 39315 / El Tor Inaba N16961).